The primary structure comprises 309 residues: Glutaminase (309 aa).

Residues Ser-65, Asn-117, Glu-162, Asn-169, Tyr-193, Tyr-245, and Val-263 each coordinate substrate.

Belongs to the glutaminase family. In terms of assembly, homotetramer.

The catalysed reaction is L-glutamine + H2O = L-glutamate + NH4(+). This Clostridioides difficile (strain 630) (Peptoclostridium difficile) protein is Glutaminase.